A 181-amino-acid chain; its full sequence is Protein Syd (181 aa).

This sequence belongs to the Syd family.

It is found in the cell inner membrane. Functionally, interacts with the SecY protein in vivo. May bind preferentially to an uncomplexed state of SecY, thus functioning either as a chelating agent for excess SecY in the cell or as a regulatory factor that negatively controls the translocase function. The chain is Protein Syd from Escherichia coli (strain K12 / DH10B).